The primary structure comprises 113 residues: Large ribosomal subunit protein bL19 (113 aa).

Belongs to the bacterial ribosomal protein bL19 family.

Functionally, this protein is located at the 30S-50S ribosomal subunit interface and may play a role in the structure and function of the aminoacyl-tRNA binding site. The chain is Large ribosomal subunit protein bL19 from Desulfitobacterium hafniense (strain DSM 10664 / DCB-2).